Here is a 281-residue protein sequence, read N- to C-terminus: ATP synthase gamma chain (281 aa).

Belongs to the ATPase gamma chain family. As to quaternary structure, F-type ATPases have 2 components, CF(1) - the catalytic core - and CF(0) - the membrane proton channel. CF(1) has five subunits: alpha(3), beta(3), gamma(1), delta(1), epsilon(1). CF(0) has three main subunits: a, b and c.

It is found in the cell inner membrane. Functionally, produces ATP from ADP in the presence of a proton gradient across the membrane. The gamma chain is believed to be important in regulating ATPase activity and the flow of protons through the CF(0) complex. The polypeptide is ATP synthase gamma chain (Ehrlichia chaffeensis (strain ATCC CRL-10679 / Arkansas)).